The chain runs to 125 residues: Large ribosomal subunit protein bL12 (125 aa).

The protein belongs to the bacterial ribosomal protein bL12 family. In terms of assembly, homodimer. Part of the ribosomal stalk of the 50S ribosomal subunit. Forms a multimeric L10(L12)X complex, where L10 forms an elongated spine to which 2 to 4 L12 dimers bind in a sequential fashion. Binds GTP-bound translation factors.

In terms of biological role, forms part of the ribosomal stalk which helps the ribosome interact with GTP-bound translation factors. Is thus essential for accurate translation. This chain is Large ribosomal subunit protein bL12, found in Gluconobacter oxydans (strain 621H) (Gluconobacter suboxydans).